Consider the following 276-residue polypeptide: Hemin import ATP-binding protein HmuV (276 aa).

The ABC transporter domain occupies 2–259; it reads LTAHHLDVAR…AHIAQCYGFA (258 aa). ATP is bound at residue 34–41; it reads GRNGAGKS.

The protein belongs to the ABC transporter superfamily. Heme (hemin) importer (TC 3.A.1.14.5) family. In terms of assembly, the complex is composed of two ATP-binding proteins (HmuV), two transmembrane proteins (HmuU) and a solute-binding protein (HmuT).

The protein resides in the cell inner membrane. Its function is as follows. Part of the ABC transporter complex HmuTUV involved in hemin import. Responsible for energy coupling to the transport system. The polypeptide is Hemin import ATP-binding protein HmuV (Burkholderia cenocepacia (strain HI2424)).